The chain runs to 99 residues: Acylphosphatase (99 aa).

The 93-residue stretch at V5 to P97 folds into the Acylphosphatase-like domain. Active-site residues include R20 and N38.

The protein belongs to the acylphosphatase family.

The enzyme catalyses an acyl phosphate + H2O = a carboxylate + phosphate + H(+). This is Acylphosphatase (acyP) from Nitrobacter winogradskyi (strain ATCC 25391 / DSM 10237 / CIP 104748 / NCIMB 11846 / Nb-255).